Consider the following 65-residue polypeptide: MLILTRKVGESIVINDDIKVTILGVKGMQVRIGIDAPKDVQVHREEIFKRIQAGSPAPEKHEDTH.

It belongs to the CsrA/RsmA family. Homodimer; the beta-strands of each monomer intercalate to form a hydrophobic core, while the alpha-helices form wings that extend away from the core.

It is found in the cytoplasm. A key translational regulator that binds mRNA to regulate translation initiation and/or mRNA stability. Mediates global changes in gene expression, shifting from rapid growth to stress survival by linking envelope stress, the stringent response and the catabolite repression systems. Usually binds in the 5'-UTR; binding at or near the Shine-Dalgarno sequence prevents ribosome-binding, repressing translation, binding elsewhere in the 5'-UTR can activate translation and/or stabilize the mRNA. Its function is antagonized by small RNA(s). The protein is Translational regulator CsrA of Pseudomonas putida (strain ATCC 47054 / DSM 6125 / CFBP 8728 / NCIMB 11950 / KT2440).